Here is a 44-residue protein sequence, read N- to C-terminus: SCIKHGDFCDGDKDDCQCCRDNGFCSCSGIFGLKWNCRCDVGTT.

Cystine bridges form between Cys-2/Cys-19, Cys-9/Cys-25, Cys-18/Cys-39, and Cys-27/Cys-37.

As to expression, expressed by the venom gland.

It is found in the secreted. Its function is as follows. Omega-agatoxins are antagonists of voltage-gated calcium channels (Cav). Toxic to mice by intracerebroventricular injection. The chain is U4-ctenitoxin-Co1a from Ctenus ornatus (Brazilian spider).